Reading from the N-terminus, the 196-residue chain is MPIGVPKVPFRSPGEGDTSWVDIYNRLYRERLFFLGQDVDTEISNQLISLMIYLSIEKDTKDLYLFINSPGGWVISGMAIYDTMQFVRPDVQTICMGLAASIASFILVGGAITKRIAFPHARVMIHQPASSFYEAQTGEFILEAEELLKLRETITRVYVQRTGKPIWVVSEDMERDVFMSATEAQAHGIVDLVAVQ.

The Nucleophile role is filled by serine 101. Histidine 126 is a catalytic residue.

Belongs to the peptidase S14 family. In terms of assembly, component of the chloroplastic Clp protease core complex.

The protein localises to the plastid. It is found in the chloroplast stroma. It carries out the reaction Hydrolysis of proteins to small peptides in the presence of ATP and magnesium. alpha-casein is the usual test substrate. In the absence of ATP, only oligopeptides shorter than five residues are hydrolyzed (such as succinyl-Leu-Tyr-|-NHMec, and Leu-Tyr-Leu-|-Tyr-Trp, in which cleavage of the -Tyr-|-Leu- and -Tyr-|-Trp bonds also occurs).. In terms of biological role, cleaves peptides in various proteins in a process that requires ATP hydrolysis. Has a chymotrypsin-like activity. Plays a major role in the degradation of misfolded proteins. The protein is ATP-dependent Clp protease proteolytic subunit of Lepidium virginicum (Virginia pepperweed).